The primary structure comprises 456 residues: N(6)-adenosine-methyltransferase non-catalytic subunit METTL14 (456 aa).

Residues 39-51 (DEQREIAETRETS) show a composition bias toward basic and acidic residues. A disordered region spans residues 39–74 (DEQREIAETRETSRASYDTSATVSKRKMPEEGEADE). A compositionally biased stretch (polar residues) spans 52–61 (RASYDTSATV). Interaction with METTL3 stretches follow at residues 135-136 (RD) and 237-238 (SG). Residues 245–254 (RMCLRKWGFR) are positively charged region required for RNA-binding. Interaction with METTL3 regions lie at residues 255-258 (RSED) and 278-287 (KAIFQRTKEH). A positively charged region required for RNA-binding region spans residues 297–298 (HR). Residues 308–312 (NVDID) are interaction with METTL3. The disordered stretch occupies residues 395 to 456 (LRPKTPPPKS…GPHRGVFAPR (62 aa)). Gly residues predominate over residues 410–421 (ASRGGGRGGPSA). Positions 423–441 (RGERGRERNRGSFRGDRGN) are enriched in basic and acidic residues.

This sequence belongs to the MT-A70-like family. As to quaternary structure, heterodimer; heterodimerizes with mettl3 to form an antiparallel heterodimer that constitutes an active methyltransferase. Component of the WMM complex, a N6-methyltransferase complex composed of a catalytic subcomplex, named MAC, and of an associated subcomplex, named MACOM. The MAC subcomplex is composed of mettl3 and mettl14.

The protein resides in the nucleus. Its function is as follows. The METTL3-METTL14 heterodimer forms a N6-methyltransferase complex that methylates adenosine residues at the N(6) position of some mRNAs and regulates the circadian clock, differentiation of embryonic stem cells and cortical neurogenesis. In the heterodimer formed with mettl3, mettl14 constitutes the RNA-binding scaffold that recognizes the substrate rather than the catalytic core. N6-methyladenosine (m6A), which takes place at the 5'-[AG]GAC-3' consensus sites of some mRNAs, plays a role in mRNA stability and processing. The protein is N(6)-adenosine-methyltransferase non-catalytic subunit METTL14 (mettl14) of Xenopus tropicalis (Western clawed frog).